A 739-amino-acid polypeptide reads, in one-letter code: Disintegrin and metalloproteinase domain-containing protein 18 (739 aa).

Residues 1-16 (MFLLLALLTELGRLQA) form the signal peptide. Positions 17-184 (HEGSEGIFLH…IKNLSKLLPQ (168 aa)) are excised as a propeptide. N-linked (GlcNAc...) asparagine glycans are attached at residues asparagine 36, asparagine 76, asparagine 122, asparagine 149, asparagine 156, asparagine 177, and asparagine 294. Topologically, residues 177-687 (NLSKLLPQYL…EKGYNTHWNN (511 aa)) are extracellular. A Peptidase M12B domain is found at 184 to 381 (QYLEIYIIVE…FETKCLQKLS (198 aa)). 4 disulfide bridges follow: cysteine 293–cysteine 376, cysteine 335–cysteine 360, cysteine 337–cysteine 342, and cysteine 450–cysteine 471. N-linked (GlcNAc...) asparagine glycans are attached at residues asparagine 359, asparagine 465, asparagine 561, asparagine 611, and asparagine 625. A Disintegrin domain is found at 390–479 (QPVCGNGILE…NCVPDTYALN (90 aa)). The EGF-like domain maps to 620-654 (MGYNCNATTKCKGKGICNNFGNCQCFPGHRPPDCK). 3 cysteine pairs are disulfide-bonded: cysteine 624-cysteine 636, cysteine 630-cysteine 642, and cysteine 644-cysteine 653. Residues 688-708 (WFILSFCIFLPFFIVFTTVIF) traverse the membrane as a helical segment. Over 709–739 (KRNEISKSCNRENAEYNRNSSVVSESDDVGH) the chain is Cytoplasmic.

Post-translationally, the prodomain and the metalloprotease-like domain are cleaved during the epididymal maturation of the spermatozoa. Expressed specifically in testis.

The protein localises to the membrane. In terms of biological role, sperm surface membrane protein that may be involved in spermatogenesis and fertilization. This is a non catalytic metalloprotease-like protein. The sequence is that of Disintegrin and metalloproteinase domain-containing protein 18 (ADAM18) from Homo sapiens (Human).